The chain runs to 134 residues: Large-conductance mechanosensitive channel (134 aa).

2 consecutive transmembrane segments (helical) span residues 15–35 and 80–100; these read IDLAIGFIIGAAFSGLVQSVV and GNFITLLINFLIVAFVLFLAV.

This sequence belongs to the MscL family. In terms of assembly, homopentamer.

It localises to the cell inner membrane. In terms of biological role, channel that opens in response to stretch forces in the membrane lipid bilayer. May participate in the regulation of osmotic pressure changes within the cell. This chain is Large-conductance mechanosensitive channel, found in Methylocella silvestris (strain DSM 15510 / CIP 108128 / LMG 27833 / NCIMB 13906 / BL2).